A 1505-amino-acid chain; its full sequence is G patch domain-containing protein 8 (1505 aa).

A G-patch domain is found at 40 to 86 (SDNIGHRLLQKHGWKLGQGLGKSLQGRTDPIPIVVKYDVMGMGRMEM). Residues 89–124 (DYAEDATERRRVLEVEKEDTEELRQKYKDYVDKEKA) adopt a coiled-coil conformation. The segment at 136 to 160 (FYCELCDKQYQKHQEFDNHINSYDH) adopts a C2H2-type zinc-finger fold. Composition is skewed to basic and acidic residues over residues 166–175 (LKDLKQREFA) and 182–206 (SRKD…RKQA). Positions 166–244 (LKDLKQREFA…SSTNSGASAV (79 aa)) are disordered. Acidic residues predominate over residues 223-233 (VDEDGGEEDKD). Lysine 311 participates in a covalent cross-link: Glycyl lysine isopeptide (Lys-Gly) (interchain with G-Cter in SUMO2). Composition is skewed to basic and acidic residues over residues 322 to 339 (HAEE…EKSS) and 421 to 436 (EGDH…ENRK). Disordered stretches follow at residues 322-393 (HAEE…EPEY) and 419-537 (QMEG…FPVL). The span at 437–449 (SSSPKPQGCSKTA) shows a compositional bias: polar residues. Lysine 479 carries the post-translational modification N6-acetyllysine. Lysine 573 is covalently cross-linked (Glycyl lysine isopeptide (Lys-Gly) (interchain with G-Cter in SUMO2)). 2 stretches are compositionally biased toward basic and acidic residues: residues 575–612 (SRNK…KSQE) and 648–665 (SETE…EPSG). The tract at residues 575–1304 (SRNKDAKAKG…ESTDGTEDAS (730 aa)) is disordered. Serine 648 carries the post-translational modification Phosphoserine. Residues 666-687 (KSHRHKKKKKHKKSSKHKRKHK) are compositionally biased toward basic residues. A compositionally biased stretch (basic and acidic residues) spans 688–702 (ADTEEKSSKAESGEK). The span at 703–715 (SKKRKKRKRKKNK) shows a compositional bias: basic residues. A phosphoserine mark is found at serine 733, serine 735, and serine 753. A compositionally biased stretch (basic and acidic residues) spans 745–767 (AQDDSQRRSLPAEEGNSGKKDDG). Positions 794-804 (ANTKHSSRSSH) are enriched in basic residues. The span at 832 to 849 (SEEEEEEEEEEEEEDEDS) shows a compositional bias: acidic residues. Residues 856–871 (SRSRSGHRHSSHRSSR) show a composition bias toward basic residues. Residues 872 to 900 (RSYSSSSDASSDQSCYSRQHSYSDDSYSD) are compositionally biased toward low complexity. Phosphoserine is present on residues serine 915 and serine 918. Residues 923–932 (SKHRSKRHKY) show a composition bias toward basic residues. 5 positions are modified to phosphoserine: serine 985, serine 1013, serine 1018, serine 1037, and serine 1039. Over residues 1017-1031 (ESPEERRSGRRDFIR) the composition is skewed to basic and acidic residues. Over residues 1050–1063 (GPGKKEDGRGDDSK) the composition is skewed to basic and acidic residues. Serine 1085 carries the phosphoserine modification. Composition is skewed to basic and acidic residues over residues 1097-1112 (LLEK…KPNV), 1163-1185 (KKCE…EEGS), and 1211-1220 (EEPKSEEATA). Residue lysine 1109 forms a Glycyl lysine isopeptide (Lys-Gly) (interchain with G-Cter in SUMO2) linkage. Serine 1179 carries the post-translational modification Phosphoserine.

This Mus musculus (Mouse) protein is G patch domain-containing protein 8 (Gpatch8).